The primary structure comprises 895 residues: Putative endoplasmic reticulum metallopeptidase 1-A (895 aa).

Residues 1–30 form a disordered region; the sequence is MLRRRGGPNELRDELNNSKNQPEDDQRTKR. Residues 1–34 lie on the Cytoplasmic side of the membrane; it reads MLRRRGGPNELRDELNNSKNQPEDDQRTKRGRES. A compositionally biased stretch (basic and acidic residues) spans 10-30; that stretch reads ELRDELNNSKNQPEDDQRTKR. A helical membrane pass occupies residues 35-55; the sequence is IGFRHWIYFVLTVAIVYAGVV. Residues 56–383 lie on the Lumenal side of the membrane; sequence ALHRKMPAVR…VVGLFTVYYS (328 aa). Residues H174 and D186 each contribute to the Zn(2+) site. E220 serves as the catalytic Proton acceptor. E221, E247, and H323 together coordinate Zn(2+). A helical transmembrane segment spans residues 384-404; it reads VNVGKLLNYIACFATYFLVVL. Residues 405 to 423 are Cytoplasmic-facing; it reads RIRNRLYSVGDLAIAFKHH. Residues 424-444 traverse the membrane as a helical segment; sequence VVAFLAMVITMLLIIAFVVQM. At 445 to 452 the chain is on the lumenal side; that stretch reads DLVMCWYK. A helical membrane pass occupies residues 453–473; it reads MPEIVGALYVLPMLIAGAIVH. Residues 474 to 492 are Cytoplasmic-facing; the sequence is SHYADNNRIRNVEMVQYDT. The chain crosses the membrane as a helical span at residues 493 to 513; it reads ILLSFASILFLMTFYNLSSAF. At 514-517 the chain is on the lumenal side; sequence YVLN. A helical transmembrane segment spans residues 518 to 538; the sequence is NLILPVFKDIIIWALGLFGVI. Residues 539 to 544 are Cytoplasmic-facing; the sequence is RRVTPR. The helical transmembrane segment at 545-565 threads the bilayer; the sequence is VLFFTQLFCFLPTFVFAAYAI. Topologically, residues 566 to 586 are lumenal; sequence SQCVDFFVPVMGRLGNAINPE. Residues 587–607 form a helical membrane-spanning segment; it reads FIMGPLGLVIASGFILFVNNL. Over 608–613 the chain is Cytoplasmic; that stretch reads FYISRR. A helical membrane pass occupies residues 614–634; the sequence is MNYIIRLLFAIFALFILVLIT. Residues 635–895 are Lumenal-facing; the sequence is TKVGNPYEYS…GRSEIVVKIF (261 aa). Residues N659, N702, and N758 are each glycosylated (N-linked (GlcNAc...) asparagine).

This sequence belongs to the peptidase M28 family. Requires Zn(2+) as cofactor.

It is found in the endoplasmic reticulum membrane. The protein is Putative endoplasmic reticulum metallopeptidase 1-A of Caenorhabditis elegans.